The following is a 190-amino-acid chain: Shikimate kinase (190 aa).

19-24 is a binding site for ATP; it reads GSGKTT. Thr23 provides a ligand contact to Mg(2+). Substrate-binding residues include Asp41, Arg65, and Gly87. Arg124 is a binding site for ATP. Residue Arg143 participates in substrate binding.

The protein belongs to the shikimate kinase family. Monomer. Mg(2+) serves as cofactor.

It localises to the cytoplasm. It carries out the reaction shikimate + ATP = 3-phosphoshikimate + ADP + H(+). Its pathway is metabolic intermediate biosynthesis; chorismate biosynthesis; chorismate from D-erythrose 4-phosphate and phosphoenolpyruvate: step 5/7. Functionally, catalyzes the specific phosphorylation of the 3-hydroxyl group of shikimic acid using ATP as a cosubstrate. This Synechococcus sp. (strain ATCC 27144 / PCC 6301 / SAUG 1402/1) (Anacystis nidulans) protein is Shikimate kinase.